Reading from the N-terminus, the 38-residue chain is Cytochrome b6-f complex subunit 5 (38 aa).

A helical membrane pass occupies residues 5 to 25 (LLCGIVLGLIPVTLLGLFVDA).

Belongs to the PetG family. As to quaternary structure, the 4 large subunits of the cytochrome b6-f complex are cytochrome b6, subunit IV (17 kDa polypeptide, PetD), cytochrome f and the Rieske protein, while the 4 small subunits are PetG, PetL, PetM and PetN. The complex functions as a dimer.

Its subcellular location is the cellular thylakoid membrane. In terms of biological role, component of the cytochrome b6-f complex, which mediates electron transfer between photosystem II (PSII) and photosystem I (PSI), cyclic electron flow around PSI, and state transitions. PetG is required for either the stability or assembly of the cytochrome b6-f complex. In Prochlorococcus marinus (strain MIT 9313), this protein is Cytochrome b6-f complex subunit 5.